A 111-amino-acid chain; its full sequence is uncharacterized protein (111 aa).

A disordered region spans residues 12–34 (AWCPSRPPASAPSAPQEAARRGD). The tract at residues 71 to 76 (PNIIIT) is required for interaction with PPP3CA. A phosphothreonine mark is found at threonine 79 and threonine 81.

Interacts (via PxIxIT motif, when phosphorylated on Thr-79) with PPP3CA.

This is an uncharacterized protein from Mus musculus (Mouse).